Consider the following 70-residue polypeptide: DNA-directed RNA polymerase subunit omega (70 aa).

The protein belongs to the RNA polymerase subunit omega family. In terms of assembly, the RNAP catalytic core consists of 2 alpha, 1 beta, 1 beta' and 1 omega subunit. When a sigma factor is associated with the core the holoenzyme is formed, which can initiate transcription.

The enzyme catalyses RNA(n) + a ribonucleoside 5'-triphosphate = RNA(n+1) + diphosphate. In terms of biological role, promotes RNA polymerase assembly. Latches the N- and C-terminal regions of the beta' subunit thereby facilitating its interaction with the beta and alpha subunits. In Bacillus cereus (strain G9842), this protein is DNA-directed RNA polymerase subunit omega.